Here is a 369-residue protein sequence, read N- to C-terminus: Methylthioribose-1-phosphate isomerase (369 aa).

Substrate is bound by residues 54 to 56 (RGA), Arg95, and Gln208. Residue Asp249 is the Proton donor of the active site. 259-260 (NK) is a binding site for substrate.

It belongs to the eIF-2B alpha/beta/delta subunits family. MtnA subfamily.

The catalysed reaction is 5-(methylsulfanyl)-alpha-D-ribose 1-phosphate = 5-(methylsulfanyl)-D-ribulose 1-phosphate. It participates in amino-acid biosynthesis; L-methionine biosynthesis via salvage pathway; L-methionine from S-methyl-5-thio-alpha-D-ribose 1-phosphate: step 1/6. Functionally, catalyzes the interconversion of methylthioribose-1-phosphate (MTR-1-P) into methylthioribulose-1-phosphate (MTRu-1-P). This is Methylthioribose-1-phosphate isomerase from Desulfatibacillum aliphaticivorans.